The sequence spans 84 residues: Toxin To7 (84 aa).

Positions methionine 1–alanine 20 are cleaved as a signal peptide. Residues leucine 21–tyrosine 83 enclose the LCN-type CS-alpha/beta domain. Intrachain disulfides connect cysteine 32–cysteine 82, cysteine 36–cysteine 59, cysteine 42–cysteine 64, and cysteine 46–cysteine 66.

Expressed by the venom gland.

Its subcellular location is the secreted. Functionally, inhibits voltage-gated sodium channels (Nav). The protein is Toxin To7 of Tityus obscurus (Amazonian scorpion).